The sequence spans 549 residues: Elongator complex protein 3 (549 aa).

The Radical SAM core domain occupies 84 to 374; that stretch reads RTASGIAVVA…YRVQRDIPMP (291 aa). 3 residues coordinate [4Fe-4S] cluster: C101, C111, and C114. Acetyl-CoA is bound by residues K166, 476-479, 499-501, and Y532; these read ELHV and FGM. The N-acetyltransferase domain maps to 398–549; the sequence is TECRDVRTRE…EGPYMVKKLD (152 aa).

It belongs to the ELP3 family. In terms of assembly, component of the elongator complex. Interacts with transcriptional repressors snai1 and snai2; interaction with snai1 inhibits its ubiquitination and stabilizes it. Requires [4Fe-4S] cluster as cofactor.

The protein resides in the cytoplasm. It localises to the nucleus. It carries out the reaction uridine(34) in tRNA + acetyl-CoA + S-adenosyl-L-methionine + H2O = 5-(carboxymethyl)uridine(34) in tRNA + 5'-deoxyadenosine + L-methionine + CoA + 2 H(+). Its pathway is tRNA modification; 5-methoxycarbonylmethyl-2-thiouridine-tRNA biosynthesis. Functionally, catalytic tRNA acetyltransferase subunit of the elongator complex which is required for multiple tRNA modifications, including mcm5U (5-methoxycarbonylmethyl uridine), mcm5s2U (5-methoxycarbonylmethyl-2-thiouridine), and ncm5U (5-carbamoylmethyl uridine). In the elongator complex, acts as a tRNA uridine(34) acetyltransferase by mediating formation of carboxymethyluridine in the wobble base at position 34 in tRNAs. Stabilizes transcriptional repressor snai1 by inhibiting its ubiquitination which promotes neural crest cell migration. The sequence is that of Elongator complex protein 3 from Xenopus tropicalis (Western clawed frog).